Reading from the N-terminus, the 967-residue chain is Isoleucine--tRNA ligase (967 aa).

A 'HIGH' region motif is present at residues 68–78 (PYANGTLHMGH). Glu-583 contributes to the L-isoleucyl-5'-AMP binding site. Positions 624–628 (KMSKS) match the 'KMSKS' region motif. Residue Lys-627 coordinates ATP. 4 residues coordinate Zn(2+): Cys-937, Cys-940, Cys-957, and Cys-960.

Belongs to the class-I aminoacyl-tRNA synthetase family. IleS type 1 subfamily. As to quaternary structure, monomer. Zn(2+) serves as cofactor.

It is found in the cytoplasm. The catalysed reaction is tRNA(Ile) + L-isoleucine + ATP = L-isoleucyl-tRNA(Ile) + AMP + diphosphate. Functionally, catalyzes the attachment of isoleucine to tRNA(Ile). As IleRS can inadvertently accommodate and process structurally similar amino acids such as valine, to avoid such errors it has two additional distinct tRNA(Ile)-dependent editing activities. One activity is designated as 'pretransfer' editing and involves the hydrolysis of activated Val-AMP. The other activity is designated 'posttransfer' editing and involves deacylation of mischarged Val-tRNA(Ile). The protein is Isoleucine--tRNA ligase of Prochlorococcus marinus (strain NATL2A).